Reading from the N-terminus, the 119-residue chain is Host cell factor C1 regulator 1 (119 aa).

The disordered stretch occupies residues 1-34 (MILQQPLERGPQGRAQRDPRAASGASGGLDAREP). The interaction with HCFC1 stretch occupies residues 57 to 60 (DHPY). The Nuclear export signal signature appears at 91–100 (IPEALRLLRL).

In terms of assembly, interacts with HCFC1.

Its subcellular location is the cytoplasm. The protein localises to the nucleus. Functionally, regulates HCFC1 activity by modulating its subcellular localization. Overexpression of HCFC1R1 leads to accumulation of HCFC1 in the cytoplasm. HCFC1R1-mediated export may provide the pool of cytoplasmic HCFC1 required for import of virion-derived VP16 into the nucleus. The protein is Host cell factor C1 regulator 1 (HCFC1R1) of Bos taurus (Bovine).